The primary structure comprises 521 residues: Cytochrome P450 monooxygenase 105 (521 aa).

The helical transmembrane segment at 12-32 threads the bilayer; that stretch reads GVASPATLAVAAVTFLTALVL. 3 N-linked (GlcNAc...) asparagine glycosylation sites follow: Asn218, Asn274, and Asn317. Cys449 contacts heme.

This sequence belongs to the cytochrome P450 family. The cofactor is heme.

It is found in the membrane. It functions in the pathway secondary metabolite biosynthesis. In terms of biological role, cytochrome P450 monooxygenase that is able to use anthracene, carbazole, pyrene, phenanthrene and trans-stilbene as substrates for oxidation. These multifunctional properties against a series of polycyclic aromatic hydrocarbons (PAHs) suggest that CYP105 would play important roles, at least in part, in fungal metabolic systems involved in xenobiotic detoxification. The chain is Cytochrome P450 monooxygenase 105 from Postia placenta (strain ATCC 44394 / Madison 698-R) (Brown rot fungus).